The sequence spans 305 residues: Serine/threonine-protein kinase 16 (305 aa).

G2 carries the N-myristoyl glycine lipid modification. S-palmitoyl cysteine attachment occurs at residues C6 and C8. Residues 20–293 form the Protein kinase domain; sequence YLFVQKLGEG…PVLLSQLEAL (274 aa). Residues 26–34 and K49 contribute to the ATP site; that span reads LGEGGFSYV. D148 (proton acceptor) is an active-site residue. The segment at 166 to 202 is activation loop; that stretch reads DLGSMNQACIQVEGSRQALALQDWAAQRCTISYRAPE. At S197 the chain carries Phosphoserine; by autocatalysis. At Y198 the chain carries Phosphotyrosine; by autocatalysis.

The protein belongs to the protein kinase superfamily. Ser/Thr protein kinase family. As to quaternary structure, monomer. Interacts with DRG1 (via its N-terminal); the interaction phosphorylates DRG1. In terms of processing, mainly autophosphorylated on serine/threonine residues. Also autophosphorylated on Tyr-198. In terms of tissue distribution, expressed in heart, liver, brain, spleen, lung, skeletal muscle, kidney and testis.

The protein localises to the cytoplasm. Its subcellular location is the perinuclear region. It localises to the membrane. It carries out the reaction L-seryl-[protein] + ATP = O-phospho-L-seryl-[protein] + ADP + H(+). The enzyme catalyses L-threonyl-[protein] + ATP = O-phospho-L-threonyl-[protein] + ADP + H(+). It catalyses the reaction L-tyrosyl-[protein] + ATP = O-phospho-L-tyrosyl-[protein] + ADP + H(+). In terms of biological role, membrane-associated protein kinase that phosphorylates on serine and threonine residues. In vitro substrates include DRG1, ENO1 and EIF4EBP1. Also autophosphorylates. May be involved in secretory vesicle trafficking or intracellular signaling. May have a role in regulating stromal-epithelial interactions that occur during ductal morphogenesis in the mammary gland. May be involved in TGF-beta signaling. Able to autophosphorylate on Tyr residue; it is however unclear whether it has tyrosine-protein kinase toward other proteins. This chain is Serine/threonine-protein kinase 16 (Stk16), found in Rattus norvegicus (Rat).